A 107-amino-acid chain; its full sequence is Small ribosomal subunit protein uS17 (107 aa).

The protein belongs to the universal ribosomal protein uS17 family. In terms of assembly, part of the 30S ribosomal subunit.

One of the primary rRNA binding proteins, it binds specifically to the 5'-end of 16S ribosomal RNA. The sequence is that of Small ribosomal subunit protein uS17 from Aquifex aeolicus (strain VF5).